Here is a 426-residue protein sequence, read N- to C-terminus: Gamma-glutamyl phosphate reductase (426 aa).

Belongs to the gamma-glutamyl phosphate reductase family.

It is found in the cytoplasm. It catalyses the reaction L-glutamate 5-semialdehyde + phosphate + NADP(+) = L-glutamyl 5-phosphate + NADPH + H(+). Its pathway is amino-acid biosynthesis; L-proline biosynthesis; L-glutamate 5-semialdehyde from L-glutamate: step 2/2. Its function is as follows. Catalyzes the NADPH-dependent reduction of L-glutamate 5-phosphate into L-glutamate 5-semialdehyde and phosphate. The product spontaneously undergoes cyclization to form 1-pyrroline-5-carboxylate. This Ralstonia pickettii (strain 12J) protein is Gamma-glutamyl phosphate reductase.